Here is a 171-residue protein sequence, read N- to C-terminus: MHQVISATTNPAKIQAILQAFEEIFGEGSCHITPIAVESGVPEQPFGSEETRTGARNRVANARLLCPEADFWVAIEAGIDDNSTFSWVVIESVELRGESRSATLPLPAVILENVRAGDALGPVMSRYTGIDEIGRKEGAIGIFTAGKLTRSSVYHQAVILALSPFHNAVYR.

8–13 (TTNPAK) is a binding site for substrate. Mg(2+) is bound by residues E38 and E68. 68–69 (EA) serves as a coordination point for substrate.

It belongs to the YjjX NTPase family. Homodimer. Mg(2+) is required as a cofactor. Requires Mn(2+) as cofactor.

It catalyses the reaction XTP + H2O = XDP + phosphate + H(+). It carries out the reaction ITP + H2O = IDP + phosphate + H(+). In terms of biological role, phosphatase that hydrolyzes non-canonical purine nucleotides such as XTP and ITP to their respective diphosphate derivatives. Probably excludes non-canonical purines from DNA/RNA precursor pool, thus preventing their incorporation into DNA/RNA and avoiding chromosomal lesions. This Salmonella arizonae (strain ATCC BAA-731 / CDC346-86 / RSK2980) protein is Inosine/xanthosine triphosphatase (yjjX).